A 177-amino-acid polypeptide reads, in one-letter code: Protein SOB FIVE-LIKE 6 (177 aa).

An SOFL-A motif is present at residues 14-19 (SGWTMY). 2 disordered regions span residues 37 to 60 (ETKQ…PYYC) and 78 to 104 (KSKS…FNSS). The SOFL-B signature appears at 47–56 (SMVSDASSGP). Over residues 79 to 90 (SKSKNKNKNKKK) the composition is skewed to basic residues.

It belongs to the SOFL plant protein family. In terms of tissue distribution, expressed in seedlings, flowers and siliques. Barely detectable in roots and leaves.

It localises to the cytoplasm. The protein localises to the nucleus. Its function is as follows. Involved in cytokinin-mediated development. The sequence is that of Protein SOB FIVE-LIKE 6 from Arabidopsis thaliana (Mouse-ear cress).